A 314-amino-acid polypeptide reads, in one-letter code: MNFSVGLGRDDAEKRLVQNGVSRRDFMKFCATVAAAMGMGPAFAPKVAEALTAKHRPSVVWLHNAECTGCTEAAIRTIKPYIDALILDTISLDYQETIMAAAGEAAEAALHQALEGKDGYYLVVEGGLPTIDGGQWGMVAGHPMIETTKKAAAKAKGIICIGTCSAYGGVQKAKPNPSQAKGVSEALGVKTINIPGCPPNPINFVGAVVHVLTKGIPDLDENGRPKLFYGELVHDNCPRLPHFEASEFAPSFDSEEAKKGFCLYELGCKGPVTYNNCPKVLFNQVNWPVQAGHPCLGCSEPDFWDTMTPFYEQG.

Positions 1–49 form a signal peptide, tat-type signal; the sequence is MNFSVGLGRDDAEKRLVQNGVSRRDFMKFCATVAAAMGMGPAFAPKVAE. C67, C70, C164, C197, H234, C237, C262, and C268 together coordinate [4Fe-4S] cluster. The [3Fe-4S] cluster site is built by C277, C295, and C298.

This sequence belongs to the [NiFe]/[NiFeSe] hydrogenase small subunit family. In terms of assembly, heterodimer of a large and a small subunit. The cofactor is [4Fe-4S] cluster. It depends on [3Fe-4S] cluster as a cofactor. Predicted to be exported by the Tat system. The position of the signal peptide cleavage has been experimentally proven.

It is found in the periplasm. It catalyses the reaction 2 Fe(III)-[cytochrome c3] + H2 = 2 Fe(II)-[cytochrome c3] + 2 H(+). In terms of biological role, involved in hydrogen uptake for the anaerobic reduction of sulfate to hydrogen sulfide in an electron transport chain. Cytochrome c3 is the physiological electron acceptor. The sequence is that of Periplasmic [NiFe] hydrogenase small subunit (hydA) from Solidesulfovibrio fructosivorans (Desulfovibrio fructosivorans).